We begin with the raw amino-acid sequence, 70 residues long: uncharacterized protein (70 aa).

This is an uncharacterized protein from Methanocaldococcus jannaschii (strain ATCC 43067 / DSM 2661 / JAL-1 / JCM 10045 / NBRC 100440) (Methanococcus jannaschii).